The following is a 155-amino-acid chain: Ribosome maturation factor RimP (155 aa).

It belongs to the RimP family.

The protein localises to the cytoplasm. Required for maturation of 30S ribosomal subunits. The sequence is that of Ribosome maturation factor RimP from Gloeothece citriformis (strain PCC 7424) (Cyanothece sp. (strain PCC 7424)).